The following is a 236-amino-acid chain: 5'-methylthioadenosine/S-adenosylhomocysteine nucleosidase (236 aa).

Catalysis depends on E12, which acts as the Proton acceptor. Substrate is bound by residues G78, I153, and 174–175 (ME). Catalysis depends on D198, which acts as the Proton donor.

Belongs to the PNP/UDP phosphorylase family. MtnN subfamily.

It catalyses the reaction S-adenosyl-L-homocysteine + H2O = S-(5-deoxy-D-ribos-5-yl)-L-homocysteine + adenine. The catalysed reaction is S-methyl-5'-thioadenosine + H2O = 5-(methylsulfanyl)-D-ribose + adenine. It carries out the reaction 5'-deoxyadenosine + H2O = 5-deoxy-D-ribose + adenine. The protein operates within amino-acid biosynthesis; L-methionine biosynthesis via salvage pathway; S-methyl-5-thio-alpha-D-ribose 1-phosphate from S-methyl-5'-thioadenosine (hydrolase route): step 1/2. In terms of biological role, catalyzes the irreversible cleavage of the glycosidic bond in both 5'-methylthioadenosine (MTA) and S-adenosylhomocysteine (SAH/AdoHcy) to adenine and the corresponding thioribose, 5'-methylthioribose and S-ribosylhomocysteine, respectively. Also cleaves 5'-deoxyadenosine, a toxic by-product of radical S-adenosylmethionine (SAM) enzymes, into 5-deoxyribose and adenine. This chain is 5'-methylthioadenosine/S-adenosylhomocysteine nucleosidase, found in Shewanella sp. (strain MR-7).